The following is a 1086-amino-acid chain: Receptor-type guanylate cyclase gcy-6 (1086 aa).

Positions 1-21 are cleaved as a signal peptide; sequence MIGVYLRSVIFPLLFVIQTIC. Residues 22–487 lie on the Extracellular side of the membrane; sequence QPPGNVFHLG…PANVFFQYIG (466 aa). N-linked (GlcNAc...) asparagine glycosylation is found at Asn325, Asn343, Asn387, and Asn427. Residues 488–508 traverse the membrane as a helical segment; it reads WFIAAIIIIFFTIMGAILAFI. Over 509 to 1086 the chain is Cytoplasmic; that stretch reads YLCHAKQQEV…APKILKKKQD (578 aa). The Protein kinase domain maps to 560–836; sequence SSTLSEVGET…NDNLMDHVFN (277 aa). Residues 566 to 574 and Lys589 each bind ATP; that span reads VGETRNYLF. Residues 894-1024 enclose the Guanylate cyclase domain; it reads TLFFSDVVSF…DAVNTASRME (131 aa).

The protein belongs to the adenylyl cyclase class-4/guanylyl cyclase family. As to expression, expressed in both ASEL and ASER neurons throughout late embryonic and early larval stages. In adults, expressed asymmetrically in ASE left (ASEL) sensory neuron.

Its subcellular location is the cell membrane. It carries out the reaction GTP = 3',5'-cyclic GMP + diphosphate. Guanylate cyclase involved in the production of the second messenger cGMP. Regulates chemotaxis responses toward the salt ion Mg(2+) and to a lesser extent toward Cl(1-) in ASE left (ASEL) sensory neuron. The protein is Receptor-type guanylate cyclase gcy-6 of Caenorhabditis elegans.